The primary structure comprises 323 residues: G patch domain-containing protein 4 (323 aa).

Disordered stretches follow at residues 1–32, 84–110, 124–185, and 197–323; these read MSASSGEKSQGRRFAEQQMHKHGWTEGKGLGR, GVKVNRTKDDDAPVTNKKPRKALSNRN, PGGE…SAKL, and AKYG…NKSE. 2 stretches are compositionally biased toward basic and acidic residues: residues 9–32 and 84–94; these read SQGRRFAEQQMHKHGWTEGKGLGR and GVKVNRTKDDD. The G-patch domain occupies 11–57; that stretch reads GRRFAEQQMHKHGWTEGKGLGRRENGISEAIKVKVKCDHAGVGHNSA. A compositionally biased stretch (low complexity) spans 131–141; sequence KEPSSSESSDS. Over residues 252 to 261 the composition is skewed to acidic residues; that stretch reads EREEEEEEES. The span at 281–291 shows a compositional bias: basic residues; that stretch reads SKKKKSKKKHR. Polar residues predominate over residues 294–306; sequence SASPQEEQVTEST. Residues 311-323 are compositionally biased toward basic residues; it reads KPKKKKKKKNKSE.

In Xenopus tropicalis (Western clawed frog), this protein is G patch domain-containing protein 4 (gpatch4).